The primary structure comprises 144 residues: Large ribosomal subunit protein uL16 (144 aa).

The protein belongs to the universal ribosomal protein uL16 family. Part of the 50S ribosomal subunit.

Binds 23S rRNA and is also seen to make contacts with the A and possibly P site tRNAs. The sequence is that of Large ribosomal subunit protein uL16 from Bacillus licheniformis (strain ATCC 14580 / DSM 13 / JCM 2505 / CCUG 7422 / NBRC 12200 / NCIMB 9375 / NCTC 10341 / NRRL NRS-1264 / Gibson 46).